We begin with the raw amino-acid sequence, 456 residues long: D-glycerate 3-kinase, chloroplastic (456 aa).

A chloroplast-targeting transit peptide spans Met1–Ser63. Ala215–Thr222 serves as a coordination point for ATP.

Belongs to the GLYK kinase family.

It localises to the plastid. The protein resides in the chloroplast. Its subcellular location is the cytoplasm. It carries out the reaction (R)-glycerate + ATP = (2R)-3-phosphoglycerate + ADP + H(+). Its pathway is photosynthesis; photorespiration; 3-phospho-D-glycerate from glycine: step 4/4. Catalyzes the concluding reaction of the photorespiratory C2 cycle, an indispensable ancillary metabolic pathway to the photosynthetic C3 cycle that enables land plants to grow in an oxygen-containing atmosphere. In terms of biological role, cytoplasmic D-glycerate 3-kinase that constitutes a photorespiratory bypass that alleviates fluctuating light-induced photoinhibition. This is D-glycerate 3-kinase, chloroplastic from Arabidopsis thaliana (Mouse-ear cress).